Reading from the N-terminus, the 427-residue chain is Glutamate-1-semialdehyde 2,1-aminomutase (427 aa).

Lys265 bears the N6-(pyridoxal phosphate)lysine mark.

It belongs to the class-III pyridoxal-phosphate-dependent aminotransferase family. HemL subfamily. In terms of assembly, homodimer. Pyridoxal 5'-phosphate serves as cofactor.

The protein localises to the cytoplasm. It carries out the reaction (S)-4-amino-5-oxopentanoate = 5-aminolevulinate. It functions in the pathway porphyrin-containing compound metabolism; protoporphyrin-IX biosynthesis; 5-aminolevulinate from L-glutamyl-tRNA(Glu): step 2/2. This is Glutamate-1-semialdehyde 2,1-aminomutase from Teredinibacter turnerae (strain ATCC 39867 / T7901).